We begin with the raw amino-acid sequence, 189 residues long: Threonylcarbamoyl-AMP synthase (189 aa).

A YrdC-like domain is found at Thr-6–Gly-189.

The protein belongs to the SUA5 family. TsaC subfamily.

It is found in the cytoplasm. It catalyses the reaction L-threonine + hydrogencarbonate + ATP = L-threonylcarbamoyladenylate + diphosphate + H2O. Functionally, required for the formation of a threonylcarbamoyl group on adenosine at position 37 (t(6)A37) in tRNAs that read codons beginning with adenine. Catalyzes the conversion of L-threonine, HCO(3)(-)/CO(2) and ATP to give threonylcarbamoyl-AMP (TC-AMP) as the acyladenylate intermediate, with the release of diphosphate. The polypeptide is Threonylcarbamoyl-AMP synthase (Serratia proteamaculans (strain 568)).